Consider the following 316-residue polypeptide: Coiled-coil domain-containing protein 130 homolog (316 aa).

Residues 182–203 (ANSRLRAEFRQQKKEINGQQEL) are a coiled coil. Positions 287–316 (KLEETTSSATNEKPISLVGDYSSSDNDSNG) are disordered.

It belongs to the CWC16 family.

This Drosophila melanogaster (Fruit fly) protein is Coiled-coil domain-containing protein 130 homolog.